A 258-amino-acid chain; its full sequence is L-aminoadipate-semialdehyde dehydrogenase-phosphopantetheinyl transferase (258 aa).

The protein belongs to the P-Pant transferase superfamily. AcpS family.

It localises to the cytoplasm. It is found in the nucleus. The catalysed reaction is apo-[ACP] + CoA = holo-[ACP] + adenosine 3',5'-bisphosphate + H(+). Its function is as follows. Catalyzes the transfer of a 4'-phosphopantetheine moiety from coenzyme A to a serine residue of acceptor proteins, such as alpha-aminoadipate reductase. Necessary for alpha-aminoadipate reductase activity. This Schizosaccharomyces pombe (strain 972 / ATCC 24843) (Fission yeast) protein is L-aminoadipate-semialdehyde dehydrogenase-phosphopantetheinyl transferase (lys7).